The primary structure comprises 213 residues: MQPLSQIRREYSQGHLTEASLLADPYAQFDKWMADAVEAGLPDPTAMTVATVNSQGQPSQRIVLLKDVMDGCFVFYTNLGSRKAQDLLTNSKISLHFPWHILERQVLVRGSASLLPRQDVQHYFSSRPLSSQLAAWTSKQSQPIESRDALLSRFEDTKIKFSDKDIPAPEFWGGFKIIPQEIEFWQGGEHRLHDRFLFSRENSSNWSIQRLMP.

Substrate is bound by residues 8-11 (RREY) and K66. Residues 61 to 66 (RIVLLK), 76 to 77 (YT), R82, K83, and Q105 each bind FMN. Positions 123, 127, and 131 each coordinate substrate. Residues 140–141 (QS) and W185 contribute to the FMN site. 191-193 (RLH) lines the substrate pocket. R195 is an FMN binding site.

It belongs to the pyridoxamine 5'-phosphate oxidase family. In terms of assembly, homodimer. It depends on FMN as a cofactor.

The enzyme catalyses pyridoxamine 5'-phosphate + O2 + H2O = pyridoxal 5'-phosphate + H2O2 + NH4(+). The catalysed reaction is pyridoxine 5'-phosphate + O2 = pyridoxal 5'-phosphate + H2O2. The protein operates within cofactor metabolism; pyridoxal 5'-phosphate salvage; pyridoxal 5'-phosphate from pyridoxamine 5'-phosphate: step 1/1. It participates in cofactor metabolism; pyridoxal 5'-phosphate salvage; pyridoxal 5'-phosphate from pyridoxine 5'-phosphate: step 1/1. In terms of biological role, catalyzes the oxidation of either pyridoxine 5'-phosphate (PNP) or pyridoxamine 5'-phosphate (PMP) into pyridoxal 5'-phosphate (PLP). The sequence is that of Pyridoxine/pyridoxamine 5'-phosphate oxidase from Pseudoalteromonas atlantica (strain T6c / ATCC BAA-1087).